Reading from the N-terminus, the 89-residue chain is HssA/B-like protein 14 (89 aa).

Belongs to the hssA/B family.

The protein is HssA/B-like protein 14 (hssl14) of Dictyostelium discoideum (Social amoeba).